The chain runs to 507 residues: Lysine--tRNA ligase (507 aa).

Mg(2+) is bound by residues Glu-416 and Glu-423.

It belongs to the class-II aminoacyl-tRNA synthetase family. Homodimer. The cofactor is Mg(2+).

The protein localises to the cytoplasm. It carries out the reaction tRNA(Lys) + L-lysine + ATP = L-lysyl-tRNA(Lys) + AMP + diphosphate. The chain is Lysine--tRNA ligase from Hahella chejuensis (strain KCTC 2396).